We begin with the raw amino-acid sequence, 2904 residues long: Highly reducing polyketide synthase bet1 (2904 aa).

In terms of domain architecture, Ketosynthase family 3 (KS3) spans 8–441; sequence NEPIAIVGSG…GTNAHAIVES (434 aa). Catalysis depends on for beta-ketoacyl synthase activity residues Cys181, His320, and His361. Residues 553 to 875 form an acyl transferase (AT) domain region; sequence VFTGQGAQYA…PYHGTLLRGG (323 aa). Residues 948–1081 are N-terminal hotdog fold; that stretch reads HQLLGDVSPD…GELKVVLVDE (134 aa). The 310-residue stretch at 948–1257 folds into the PKS/mFAS DH domain; that stretch reads HQLLGDVSPD…FKPVGSDASN (310 aa). The segment at 971-1255 is dehydratase (DH) domain; it reads PREMTWLEGH…VKFKPVGSDA (285 aa). His980 acts as the Proton acceptor; for dehydratase activity in catalysis. Residues 1098-1257 form a C-terminal hotdog fold region; the sequence is MIPVQPSRLY…FKPVGSDASN (160 aa). Residue Asp1159 is the Proton donor; for dehydratase activity of the active site. Positions 1411 to 1596 are methyltransferase (cMeT) domain; it reads KQSTLWVASI…GFSGIDTMSP (186 aa). A ketoreductase (KR)domain region spans residues 2125–2298; that stretch reads TYWLVGLSGA…RSSVVNVGAI (174 aa). Positions 2407-2486 constitute a Carrier domain; it reads EVANVIKQAY…SLVELAAESI (80 aa). At Ser2445 the chain carries O-(pantetheine 4'-phosphoryl)serine. The tract at residues 2492-2543 is disordered; sequence PGVPQANANPNGPSSPDSDATESSNQNSDVDVTSTRATSPSTPAATSPDSNV. Positions 2497 to 2523 are enriched in polar residues; it reads ANANPNGPSSPDSDATESSNQNSDVDV. A compositionally biased stretch (low complexity) spans 2524-2541; the sequence is TSTRATSPSTPAATSPDS. Residues 2585 to 2817 are reductase (R) domain; it reads LTGCSGLLGH…DLVSVETCCE (233 aa).

Pantetheine 4'-phosphate serves as cofactor.

It carries out the reaction 7 malonyl-CoA + acetyl-CoA + 10 AH2 + 5 S-adenosyl-L-methionine + 2 H(+) = dehydroprobetaenone I + 10 A + 5 S-adenosyl-L-homocysteine + 7 CO2 + 8 CoA + 6 H2O. It participates in mycotoxin biosynthesis. Its function is as follows. Highly reducing polyketide synthase; part of the gene cluster that mediates the biosynthesis of betaenones, phytotoxic polyketides involved in leaf spot disease in sugar beets. The first step of the pathway is the synthesis of dehydroprobetaenone I by the polyketide synthase bet1 and the enoyl reductase bet3 via condensation of one acetyl-CoA starter unit with 7 malonyl-CoA units and 5 methylations. The C-terminal reductase (R) domain of bet1 catalyzes the reductive release of the polyketide chain. Because bet1 lacks a designated enoylreductase (ER) domain, the required activity is provided the enoyl reductase bet3. The short-chain dehydrogenase/reductase bet4 then catalyzes reduction of dehydroprobetaenone I to probetaenone I. The cytochrome P450 monooxygenase bet2 catalyzes successive epoxidation, oxidation (resulting from epoxide opening) and hydroxylation to install a tertiary alcohol in the decaline ring to yield betaenone C from dehydroprobetaenone I and betaenone B from probetaenone I. The FAD-linked oxidoreductase (orf1) is probably responsible for the conversion of betaenone C to betaenone A via an intramolecular aldol reaction between C-1 and C-17 to form the bridged tricyclic system in betaenone A. The sequence is that of Highly reducing polyketide synthase bet1 from Neocamarosporium betae (Beet black rot fungus).